The chain runs to 295 residues: MMQPEKILGLIGRNIAYSRSPLIHNTACDLLALPYVYTIFNIASADLIEPAIAGARALGIAGLNVTTPYKTTVVPFLDELSPEAASIGAVNTIVNNNGHLAGYNTDIAGFAAPLRPYAQRIKGNPVSVFGNGGAALAAIEAFRIFFHPCCVYLFVRDSAKASAMLENYVHRDIVTLCLIEELFSGESGAIAKIQRSLVIVNATPIGTAGRQNETETSILPLDTELLHPDHIVYDMVYNPLFTPLIKAAKASGAATISGIEMLLGQAARSFELWTGKEMPLEQVRAVLINNLLSSP.

Residues Ser-18 to Ser-20 and Thr-66 contribute to the shikimate site. The active-site Proton acceptor is the Lys-70. Residues Asn-91 and Asp-106 each coordinate shikimate. NADP(+) is bound by residues Gly-130–Ala-134 and Met-235. Position 237 (Tyr-237) interacts with shikimate. Gly-258 serves as a coordination point for NADP(+).

It belongs to the shikimate dehydrogenase family. As to quaternary structure, homodimer.

The catalysed reaction is shikimate + NADP(+) = 3-dehydroshikimate + NADPH + H(+). It functions in the pathway metabolic intermediate biosynthesis; chorismate biosynthesis; chorismate from D-erythrose 4-phosphate and phosphoenolpyruvate: step 4/7. Its function is as follows. Involved in the biosynthesis of the chorismate, which leads to the biosynthesis of aromatic amino acids. Catalyzes the reversible NADPH linked reduction of 3-dehydroshikimate (DHSA) to yield shikimate (SA). The sequence is that of Shikimate dehydrogenase (NADP(+)) from Chlorobium phaeobacteroides (strain DSM 266 / SMG 266 / 2430).